Reading from the N-terminus, the 521-residue chain is Protein TESPA1 (521 aa).

Ser311 is modified (phosphoserine). The span at 331-341 (QQDSDLGQFSQ) shows a compositional bias: polar residues. 2 disordered regions span residues 331 to 351 (QQDS…AEGK) and 461 to 521 (QQKW…GKDS). Positions 466–475 (QSVDRPELRR) are enriched in basic and acidic residues. A compositionally biased stretch (acidic residues) spans 485–498 (FDLEEVQSNSEEEQ). A compositionally biased stretch (basic residues) spans 505-514 (SRPRHPHHHQ).

As to quaternary structure, interacts with PLCG1 and GRB2; the association is increased with prolonged stimulation of the TCR and may facilitate the assembly of the LAT signalosome. Interacts with ITPR1. Also interacts with ITPR3. Interacts with HSPA9. May be phosphorylated in response to store-operated Ca(+2) entry.

It localises to the cytoplasm. The protein localises to the endoplasmic reticulum membrane. Functionally, required for the development and maturation of T-cells, its function being essential for the late stages of thymocyte development. Plays a role in T-cell antigen receptor (TCR)-mediated activation of the ERK and NFAT signaling pathways, possibly by serving as a scaffolding protein that promotes the assembly of the LAT signalosome in thymocytes. May play a role in the regulation of inositol 1,4,5-trisphosphate receptor-mediated Ca(2+) release and mitochondrial Ca(2+) uptake via the mitochondria-associated endoplasmic reticulum membrane (MAM) compartment. The sequence is that of Protein TESPA1 (TESPA1) from Homo sapiens (Human).